We begin with the raw amino-acid sequence, 133 residues long: Interleukin-4 (133 aa).

An N-terminal signal peptide occupies residues 1–24 (MGLTSQLIPTLVCLLVCTSNFAHG). 3 disulfide bridges follow: Cys-27–Cys-133, Cys-48–Cys-85, and Cys-70–Cys-105. N-linked (GlcNAc...) asparagine glycans are attached at residues Asn-62, Asn-96, Asn-102, and Asn-108.

This sequence belongs to the IL-4/IL-13 family.

It is found in the secreted. Its function is as follows. Participates in at least several B-cell activation processes as well as of other cell types. It is a costimulator of DNA-synthesis. It induces the expression of class II MHC molecules on resting B-cells. It enhances both secretion and cell surface expression of IgE and IgG1. It also regulates the expression of the low affinity Fc receptor for IgE (CD23) on both lymphocytes and monocytes. Positively regulates IL31RA expression in macrophages. Stimulates autophagy in dendritic cells by interfering with mTORC1 signaling and through the induction of RUFY4. The protein is Interleukin-4 (IL4) of Lama glama (Llama).